The primary structure comprises 124 residues: Phycocyanin PC645 alpha-3 subunit (124 aa).

Arginine 71 is a binding site for (2R,3E)-phycocyanobilin. 3 residues coordinate mesobiliverdin: cysteine 73, tyrosine 81, and lysine 97.

It belongs to the phycoerythrin family. Heterotetramer of 2 different alpha chains and 2 identical beta chains which form 2 alpha-beta heterodimers within the heterotetramer. Post-translationally, contains one phycocyanobilin chromophore and one mesobiliverdin chromophore with binding mediated by both the alpha and beta subunits.

It is found in the plastid. The protein resides in the chloroplast thylakoid membrane. Light-harvesting photosynthetic tetrapyrrole chromophore-protein from the phycobiliprotein complex. This Chroomonas sp. (strain CCMP270) protein is Phycocyanin PC645 alpha-3 subunit.